The sequence spans 338 residues: Fructose-1,6-bisphosphatase class 1 (338 aa).

4 residues coordinate Mg(2+): Glu-91, Asp-113, Leu-115, and Asp-116. Substrate is bound by residues 116 to 119 (DGSS), Asn-208, and Lys-274. Glu-280 contacts Mg(2+).

This sequence belongs to the FBPase class 1 family. As to quaternary structure, homotetramer. Mg(2+) serves as cofactor.

It is found in the cytoplasm. It catalyses the reaction beta-D-fructose 1,6-bisphosphate + H2O = beta-D-fructose 6-phosphate + phosphate. The protein operates within carbohydrate biosynthesis; gluconeogenesis. This is Fructose-1,6-bisphosphatase class 1 from Ralstonia pickettii (strain 12J).